The following is a 98-amino-acid chain: Large ribosomal subunit protein uL23 (98 aa).

This sequence belongs to the universal ribosomal protein uL23 family. Part of the 50S ribosomal subunit. Contacts protein L29, and trigger factor when it is bound to the ribosome.

Its function is as follows. One of the early assembly proteins it binds 23S rRNA. One of the proteins that surrounds the polypeptide exit tunnel on the outside of the ribosome. Forms the main docking site for trigger factor binding to the ribosome. In Rickettsia rickettsii (strain Iowa), this protein is Large ribosomal subunit protein uL23.